An 880-amino-acid polypeptide reads, in one-letter code: Alanine--tRNA ligase (880 aa).

Residues His558, His562, Cys663, and His667 each contribute to the Zn(2+) site.

The protein belongs to the class-II aminoacyl-tRNA synthetase family. The cofactor is Zn(2+).

It localises to the cytoplasm. The catalysed reaction is tRNA(Ala) + L-alanine + ATP = L-alanyl-tRNA(Ala) + AMP + diphosphate. In terms of biological role, catalyzes the attachment of alanine to tRNA(Ala) in a two-step reaction: alanine is first activated by ATP to form Ala-AMP and then transferred to the acceptor end of tRNA(Ala). Also edits incorrectly charged Ser-tRNA(Ala) and Gly-tRNA(Ala) via its editing domain. This chain is Alanine--tRNA ligase, found in Mycoplasmopsis agalactiae (strain NCTC 10123 / CIP 59.7 / PG2) (Mycoplasma agalactiae).